The chain runs to 192 residues: Thymidine kinase (192 aa).

ATP is bound by residues 9–16 (SAMNAGKS) and 87–90 (DECQ). The active-site Proton acceptor is the Glu-88. Cys-145, Cys-147, Cys-182, and His-185 together coordinate Zn(2+).

The protein belongs to the thymidine kinase family. As to quaternary structure, homotetramer.

The protein localises to the cytoplasm. The enzyme catalyses thymidine + ATP = dTMP + ADP + H(+). The chain is Thymidine kinase from Vibrio vulnificus (strain YJ016).